The primary structure comprises 753 residues: Metal regulatory transcription factor 1 (753 aa).

G2 carries the post-translational modification N-acetylglycine. S5 is modified (phosphoserine). The short motif at K133–K138 is the Nuclear localization signal element. 6 consecutive C2H2-type zinc fingers follow at residues Y140 to H164, F170 to H194, F200 to H224, F229 to H253, F259 to H283, and F289 to H313. Residue S305 is modified to Phosphoserine. Disordered stretches follow at residues S308–G328, E395–Q466, and S648–M715. Polar residues predominate over residues P408 to L417. The span at S655–P666 shows a compositional bias: pro residues. Residues S679 to S698 are compositionally biased toward low complexity. Residues Q700 to L712 are compositionally biased toward polar residues.

It is found in the nucleus. Its subcellular location is the cytoplasm. Its function is as follows. Zinc-dependent transcriptional regulator of cellular adaption to conditions of exposure to heavy metals. Binds to metal responsive elements (MRE) in promoters and activates the transcription of metallothionein genes like metallothionein-2/MT2A. Also regulates the expression of metalloproteases in response to intracellular zinc and functions as a catabolic regulator of cartilages. This chain is Metal regulatory transcription factor 1 (MTF1), found in Homo sapiens (Human).